Consider the following 124-residue polypeptide: Large ribosomal subunit protein bL12 (124 aa).

Belongs to the bacterial ribosomal protein bL12 family. Homodimer. Part of the ribosomal stalk of the 50S ribosomal subunit. Forms a multimeric L10(L12)X complex, where L10 forms an elongated spine to which 2 to 4 L12 dimers bind in a sequential fashion. Binds GTP-bound translation factors.

In terms of biological role, forms part of the ribosomal stalk which helps the ribosome interact with GTP-bound translation factors. Is thus essential for accurate translation. The sequence is that of Large ribosomal subunit protein bL12 from Aromatoleum aromaticum (strain DSM 19018 / LMG 30748 / EbN1) (Azoarcus sp. (strain EbN1)).